A 382-amino-acid chain; its full sequence is Protein phosphatase 1A (382 aa).

Residue Gly-2 is the site of N-myristoyl glycine attachment. The PPM-type phosphatase domain occupies 23–291 (RYGLSSMQGW…DNMSVILICF (269 aa)). Mn(2+) is bound by residues Asp-60, Gly-61, Asp-239, and Asp-282. Phosphoserine is present on residues Ser-375 and Ser-377.

The protein belongs to the PP2C family. In terms of assembly, monomer. Interacts with SMAD2; the interaction dephosphorylates SMAD2 in its C-terminal SXS motif resulting in disruption of the SMAD2/SMAD4 complex, SMAD2 nuclear export and termination of the TGF-beta-mediated signaling. Interacts with SMAD2; the interaction dephosphorylates SMAD2 in its C-terminal SXS motif resulting in disruption of the SMAD2/SMAD4 complex, SMAD2 nuclear export and termination of the TGF-beta-mediated signaling. Interacts with the phosphorylated form of IKBKB/IKKB. It depends on Mg(2+) as a cofactor. Mn(2+) serves as cofactor. N-myristoylation is essential for the recognition of its substrates for dephosphorylation.

It is found in the nucleus. The protein resides in the cytoplasm. Its subcellular location is the cytosol. The protein localises to the membrane. It catalyses the reaction O-phospho-L-seryl-[protein] + H2O = L-seryl-[protein] + phosphate. The enzyme catalyses O-phospho-L-threonyl-[protein] + H2O = L-threonyl-[protein] + phosphate. Enzyme with a broad specificity. Negatively regulates TGF-beta signaling through dephosphorylating SMAD2 and SMAD3, resulting in their dissociation from SMAD4, nuclear export of the SMADs and termination of the TGF-beta-mediated signaling. Dephosphorylates PRKAA1 and PRKAA2. Plays an important role in the termination of TNF-alpha-mediated NF-kappa-B activation through dephosphorylating and inactivating IKBKB/IKKB. This is Protein phosphatase 1A (PPM1A) from Oryctolagus cuniculus (Rabbit).